Reading from the N-terminus, the 177-residue chain is Large ribosomal subunit protein uL6 (177 aa).

This sequence belongs to the universal ribosomal protein uL6 family. In terms of assembly, part of the 50S ribosomal subunit.

Its function is as follows. This protein binds to the 23S rRNA, and is important in its secondary structure. It is located near the subunit interface in the base of the L7/L12 stalk, and near the tRNA binding site of the peptidyltransferase center. This chain is Large ribosomal subunit protein uL6, found in Roseobacter denitrificans (strain ATCC 33942 / OCh 114) (Erythrobacter sp. (strain OCh 114)).